Here is a 197-residue protein sequence, read N- to C-terminus: MVTIEDKINLFSKIIYGEVDDKINSELDELENVEKDTIEKEEREVKKYRNKNMQSVEKKIKSKFEKEVFKLKLEEQQQLLNLKENMINETLESLKERIIDFTKSDEYINYIKSHLDNTLKDIENKEGIIIYFNKKDLEKFKKVINKDNVEVSNESKDIIGGYIIQDKNNKFRVDCSLEISIEECKEKIGISITELFM.

It belongs to the V-ATPase E subunit family.

In terms of biological role, produces ATP from ADP in the presence of a proton gradient across the membrane. This Clostridium tetani (strain Massachusetts / E88) protein is V-type ATP synthase subunit E 2.